The sequence spans 269 residues: 4-hydroxy-tetrahydrodipicolinate reductase (269 aa).

Residues 9-14, Asp-35, 102-104, and 128-131 each bind NAD(+); these read GCAGKM, GTT, and APNF. The active-site Proton donor/acceptor is His-158. His-159 serves as a coordination point for (S)-2,3,4,5-tetrahydrodipicolinate. Lys-162 (proton donor) is an active-site residue. Residue 168–169 coordinates (S)-2,3,4,5-tetrahydrodipicolinate; that stretch reads GT.

It belongs to the DapB family.

The protein resides in the cytoplasm. It carries out the reaction (S)-2,3,4,5-tetrahydrodipicolinate + NAD(+) + H2O = (2S,4S)-4-hydroxy-2,3,4,5-tetrahydrodipicolinate + NADH + H(+). The catalysed reaction is (S)-2,3,4,5-tetrahydrodipicolinate + NADP(+) + H2O = (2S,4S)-4-hydroxy-2,3,4,5-tetrahydrodipicolinate + NADPH + H(+). Its pathway is amino-acid biosynthesis; L-lysine biosynthesis via DAP pathway; (S)-tetrahydrodipicolinate from L-aspartate: step 4/4. Its function is as follows. Catalyzes the conversion of 4-hydroxy-tetrahydrodipicolinate (HTPA) to tetrahydrodipicolinate. In Gloeobacter violaceus (strain ATCC 29082 / PCC 7421), this protein is 4-hydroxy-tetrahydrodipicolinate reductase.